The primary structure comprises 432 residues: Adenylosuccinate synthetase (432 aa).

Residues 12–18 (GDEGKGK) and 40–42 (GHT) each bind GTP. Asp13 serves as the catalytic Proton acceptor. Mg(2+) contacts are provided by Asp13 and Gly40. IMP contacts are provided by residues 13-16 (DEGK), 38-41 (NAGH), Thr129, Arg143, Gln224, Thr239, and Arg303. The active-site Proton donor is the His41. 299–305 (VTTGRRR) provides a ligand contact to substrate. GTP-binding positions include Arg305, 331–333 (KLD), and 413–415 (GVG).

It belongs to the adenylosuccinate synthetase family. In terms of assembly, homodimer. It depends on Mg(2+) as a cofactor.

Its subcellular location is the cytoplasm. The catalysed reaction is IMP + L-aspartate + GTP = N(6)-(1,2-dicarboxyethyl)-AMP + GDP + phosphate + 2 H(+). Its pathway is purine metabolism; AMP biosynthesis via de novo pathway; AMP from IMP: step 1/2. Plays an important role in the de novo pathway of purine nucleotide biosynthesis. Catalyzes the first committed step in the biosynthesis of AMP from IMP. The sequence is that of Adenylosuccinate synthetase from Mycobacterium avium (strain 104).